Consider the following 581-residue polypeptide: A-type ATP synthase subunit A (581 aa).

Position 232-239 (232-239 (GPFGSGKT)) interacts with ATP.

The protein belongs to the ATPase alpha/beta chains family. As to quaternary structure, has multiple subunits with at least A(3), B(3), C, D, E, F, H, I and proteolipid K(x).

The protein localises to the cell membrane. The enzyme catalyses ATP + H2O + 4 H(+)(in) = ADP + phosphate + 5 H(+)(out). Component of the A-type ATP synthase that produces ATP from ADP in the presence of a proton gradient across the membrane. The A chain is the catalytic subunit. The polypeptide is A-type ATP synthase subunit A (Methanocorpusculum labreanum (strain ATCC 43576 / DSM 4855 / Z)).